The primary structure comprises 252 residues: MTILKQMMRKLKNEKIHMTLIDPAAKSPDESAKIAKEAEMAGTDFIMVGGSTDIDERLMDQTVSAIKENTNLKVILFPGSSNMISRHADAIFFMSLLNSSDREFIVGHQVKASKFLSLLGIEKIPMAYLVFSPGMTVGRVGKANLIDSFDRETALSYSLAAQYMGFKLIYFEAGSGAPRPVSEDTISYVKSKINIPLIVGGGIRDPETAMRIALAGADMIVTGSIAEKSNNVYSVLRNIIGKIKSIEIKNSV.

Mg(2+) contacts are provided by D22 and S51. Sn-glycerol 1-phosphate-binding positions include 170 to 176 (YFEAGSG), 201 to 202 (GG), and 223 to 224 (GS).

The protein belongs to the GGGP/HepGP synthase family. Group II subfamily. The cofactor is Mg(2+).

It is found in the cytoplasm. It carries out the reaction sn-glycerol 1-phosphate + (2E,6E,10E)-geranylgeranyl diphosphate = sn-3-O-(geranylgeranyl)glycerol 1-phosphate + diphosphate. The protein operates within membrane lipid metabolism; glycerophospholipid metabolism. In terms of biological role, prenyltransferase that catalyzes the transfer of the geranylgeranyl moiety of geranylgeranyl diphosphate (GGPP) to the C3 hydroxyl of sn-glycerol-1-phosphate (G1P). This reaction is the first ether-bond-formation step in the biosynthesis of archaeal membrane lipids. This chain is Geranylgeranylglyceryl phosphate synthase, found in Thermoplasma volcanium (strain ATCC 51530 / DSM 4299 / JCM 9571 / NBRC 15438 / GSS1).